The sequence spans 378 residues: mRNA cap guanine-N(7) methyltransferase (378 aa).

Residues 24 to 331 (SRIFFMRNMN…MYLVFGFRKK (308 aa)) enclose the mRNA cap 0 methyltransferase domain. 33–34 (NN) provides a ligand contact to mRNA. S-adenosyl-L-methionine-binding residues include Lys37, Ala62, Asp84, Asp116, Gln138, and Tyr143. 2 stretches are compositionally biased toward basic and acidic residues: residues 335-347 (EKNLESEAPEIKK) and 356-378 (DTDKTAEKNEERIEEKEENPSHC). The segment at 335–378 (EKNLESEAPEIKKVTPVPLNEDTDKTAEKNEERIEEKEENPSHC) is disordered.

Belongs to the class I-like SAM-binding methyltransferase superfamily. mRNA cap 0 methyltransferase family.

The protein resides in the nucleus. The enzyme catalyses a 5'-end (5'-triphosphoguanosine)-ribonucleoside in mRNA + S-adenosyl-L-methionine = a 5'-end (N(7)-methyl 5'-triphosphoguanosine)-ribonucleoside in mRNA + S-adenosyl-L-homocysteine. MRNA-capping methyltransferase that methylates the N7 position of the added guanosine to the 5'-cap structure of mRNAs. Binds RNA containing 5'-terminal GpppC. In Caenorhabditis briggsae, this protein is mRNA cap guanine-N(7) methyltransferase.